We begin with the raw amino-acid sequence, 95 residues long: Co-chaperonin GroES (95 aa).

It belongs to the GroES chaperonin family. Heptamer of 7 subunits arranged in a ring. Interacts with the chaperonin GroEL.

It localises to the cytoplasm. Its function is as follows. Together with the chaperonin GroEL, plays an essential role in assisting protein folding. The GroEL-GroES system forms a nano-cage that allows encapsulation of the non-native substrate proteins and provides a physical environment optimized to promote and accelerate protein folding. GroES binds to the apical surface of the GroEL ring, thereby capping the opening of the GroEL channel. The protein is Co-chaperonin GroES of Francisella tularensis subsp. holarctica (strain FTNF002-00 / FTA).